We begin with the raw amino-acid sequence, 204 residues long: Thymidylate kinase (204 aa).

11–18 is a binding site for ATP; the sequence is GLDKSGKT.

The protein belongs to the thymidylate kinase family.

The catalysed reaction is dTMP + ATP = dTDP + ADP. The protein operates within pyrimidine metabolism; dTTP biosynthesis. This is Thymidylate kinase (TMK) from Camelus.